The sequence spans 1390 residues: Hepatocyte growth factor receptor (1390 aa).

The first 24 residues, 1–24, serve as a signal peptide directing secretion; that stretch reads MKAPAVLAPGILVLLFTLVQRSNG. The Extracellular portion of the chain corresponds to 25–932; the sequence is ECKEALAKSE…VIVQPDQNFT (908 aa). Residues 27–515 form the Sema domain; that stretch reads KEALAKSEMN…TGKKITKIPL (489 aa). Asn-45 is a glycosylation site (N-linked (GlcNAc...) asparagine). Disulfide bonds link Cys-95–Cys-101, Cys-98–Cys-160, Cys-133–Cys-141, and Cys-172–Cys-175. N-linked (GlcNAc...) asparagine glycosylation is present at Asn-106. Asn-149 carries an N-linked (GlcNAc...) asparagine glycan. Asn-202 carries N-linked (GlcNAc...) asparagine glycosylation. 2 disulfides stabilise this stretch: Cys-298-Cys-363 and Cys-385-Cys-397. Asn-399 and Asn-405 each carry an N-linked (GlcNAc...) asparagine glycan. 4 disulfide bridges follow: Cys-520/Cys-538, Cys-526/Cys-561, Cys-529/Cys-545, and Cys-541/Cys-551. 3 consecutive IPT/TIG domains span residues 563-655, 657-739, and 742-836; these read PAIY…FSYV, PVIT…FSYR, and PIVY…LIYV. The O-linked (Man) threonine glycan is linked to Thr-582. 2 N-linked (GlcNAc...) asparagine glycosylation sites follow: Asn-607 and Asn-635. 2 O-linked (Man) threonine glycosylation sites follow: Thr-676 and Thr-761. N-linked (GlcNAc...) asparagine glycosylation is found at Asn-785, Asn-879, and Asn-930. A helical membrane pass occupies residues 933–955; sequence GLIAGVVSISIALLLLLGFFLWL. Residues 956-1390 lie on the Cytoplasmic side of the membrane; it reads KKRKQIKDLG…TRPASFWETS (435 aa). Ser-966 is modified (phosphoserine). Position 977 is a phosphothreonine (Thr-977). Ser-990, Ser-997, and Ser-1000 each carry phosphoserine. At Tyr-1003 the chain carries Phosphotyrosine. The 268-residue stretch at 1078-1345 folds into the Protein kinase domain; sequence VHFNEVIGRG…RISAIFSTFI (268 aa). Residues 1084 to 1092 and Lys-1110 each bind ATP; that span reads IGRGHFGCV. Asp-1204 serves as the catalytic Proton acceptor. An interaction with RANBP9 region spans residues 1212 to 1390; sequence LDEKFTVKVA…TRPASFWETS (179 aa). The residue at position 1230 (Tyr-1230) is a Phosphotyrosine. A phosphotyrosine; by autocatalysis mark is found at Tyr-1234 and Tyr-1235. Thr-1289 carries the post-translational modification Phosphothreonine. The interaction with MUC20 stretch occupies residues 1320–1359; sequence WHPKAEMRPSFSELVSRISAIFSTFIGEHYVHVNATYVNV. Tyr-1349 and Tyr-1356 each carry phosphotyrosine; by autocatalysis. At Tyr-1365 the chain carries Phosphotyrosine.

It belongs to the protein kinase superfamily. Tyr protein kinase family. As to quaternary structure, heterodimer made of an alpha chain (50 kDa) and a beta chain (145 kDa) which are disulfide linked. Binds PLXNB1. Interacts when phosphorylated with downstream effectors including STAT3, PIK3R1, SRC, PCLG1, GRB2 and GAB1. Interacts with SPSB1, SPSB2 and SPSB4. Interacts with INPP5D/SHIP1. When phosphorylated at Tyr-1356, interacts with INPPL1/SHIP2. Interacts with RANBP9 and RANBP10, as well as SPSB1, SPSB2, SPSB3 and SPSB4. SPSB1 binding occurs in the presence and in the absence of HGF, however HGF treatment has a positive effect on this interaction. Interacts with MUC20; prevents interaction with GRB2 and suppresses hepatocyte growth factor-induced cell proliferation. Interacts with GRB10. Interacts with PTPN1 and PTPN2. Interacts with HSP90AA1 and HSP90AB1; the interaction suppresses MET kinase activity. Interacts with tensin TNS3. Interacts (when phosphorylated) with tensin TNS4 (via SH2 domain); the interaction increases MET protein stability by inhibiting MET endocytosis and subsequent lysosomal degradation. In terms of processing, autophosphorylated in response to ligand binding on Tyr-1234 and Tyr-1235 in the kinase domain leading to further phosphorylation of Tyr-1349 and Tyr-1356 in the C-terminal multifunctional docking site. Dephosphorylated by PTPRJ at Tyr-1349 and Tyr-1365. Dephosphorylated by PTPN1 and PTPN2. Post-translationally, ubiquitinated. Ubiquitination by CBL regulates the receptor stability and activity through proteasomal degradation. O-mannosylation of IPT/TIG domains by TMEM260 is required for protein maturation. O-mannosylated residues are composed of single mannose glycans that are not elongated or modified.

The protein localises to the membrane. It catalyses the reaction L-tyrosyl-[protein] + ATP = O-phospho-L-tyrosyl-[protein] + ADP + H(+). With respect to regulation, in its inactive state, the C-terminal tail interacts with the catalytic domain and inhibits the kinase activity. Upon ligand binding, the C-terminal tail is displaced and becomes phosphorylated, thus increasing the kinase activity. Receptor tyrosine kinase that transduces signals from the extracellular matrix into the cytoplasm by binding to hepatocyte growth factor/HGF ligand. Regulates many physiological processes including proliferation, scattering, morphogenesis and survival. Ligand binding at the cell surface induces autophosphorylation of MET on its intracellular domain that provides docking sites for downstream signaling molecules. Following activation by ligand, interacts with the PI3-kinase subunit PIK3R1, PLCG1, SRC, GRB2, STAT3 or the adapter GAB1. Recruitment of these downstream effectors by MET leads to the activation of several signaling cascades including the RAS-ERK, PI3 kinase-AKT, or PLCgamma-PKC. The RAS-ERK activation is associated with the morphogenetic effects while PI3K/AKT coordinates prosurvival effects. During embryonic development, MET signaling plays a role in gastrulation, development and migration of muscles and neuronal precursors, angiogenesis and kidney formation. In adults, participates in wound healing as well as organ regeneration and tissue remodeling. Also promotes differentiation and proliferation of hematopoietic cells. The polypeptide is Hepatocyte growth factor receptor (MET) (Pan troglodytes (Chimpanzee)).